The primary structure comprises 1020 residues: Non-canonical nonribosomal peptide synthetase hkm10 (1020 aa).

An adenylation (A) domain region spans residues 21–419 (QMLEDPDAIA…GRFDHQVKIR (399 aa)). Positions 526-608 (QDKVPSEGAS…QLAHIVDRNQ (83 aa)) constitute a Carrier domain. Ser568 carries the post-translational modification O-(pantetheine 4'-phosphoryl)serine. Positions 652–894 (LTGATGFVGA…FVPIDYVTST (243 aa)) are short-chain dehydrogenase/reductase (R) domain.

This sequence belongs to the NRP synthetase family.

It participates in secondary metabolite biosynthesis. Its function is as follows. Non-canonical nonribosomal peptide synthetase; part of the gene cluster that mediates the biosynthesis of hancockiamides, an unusual new family of N-cinnamoylated piperazines. The NRPS hkm10 and the NmrA-like reductase hkm9 are proposed to convert two molecules of L-Phe to the intermediary piperazine called xenocockiamide A. Xenocockiamide A is then converted to hancockiamide D via a series of hydroxylations and O-methylations. The tyrosinase hkm6 may catalyze an aromatic hydroxylation, then the 2-oxoglutarate-dependent Fe(II) dioxygenase hkm4 and the FAD-dependent phenol hydroxylase hkm7 may catalyze consecutive hydroxylations to install 2 more hydroxy groups, and the methyltransferase hkm8 probably catalyzes two methylations using 2 molecules of S-adenosyl-L-methionine (SAM). The NRPS hkm11 activates and transfers trans-cinnamate supplied by the PAL hkm12 to hancockiamide D and produces hancockiamide A. NRPS Hkm11 has the flexibility to tolerate the bulky hancockiamide G as a substrate and the absence of the acetyl-transferase hkm3 opens up the opportunity for hkm11 to introduce a second N-cinnamoyl moiety. The cytochrome P450 monooxygenase hkm5 catalyzes the methylenedioxy bridge formation, converting hancockiamide A into hancockiamide G. Hkm5 can also convert hancockiamide B into hancockiamide C, and hancockiamide D into hancockiamide H. The N-acetyltransferase hkm3 finally transfers an acetyl group to 1-N of piperazine, converting hancockiamide A into hancockiamide B and hancockiamide G into hancockiamide C. The sequence is that of Non-canonical nonribosomal peptide synthetase hkm10 from Aspergillus hancockii.